A 935-amino-acid chain; its full sequence is Dual 3',5'-cyclic-AMP and -GMP phosphodiesterase 11A (935 aa).

The interval 41–125 (RHSSGQGASD…ASQKELRKSF (85 aa)) is disordered. Positions 54–69 (ALAGASSLAQSSARGS) are enriched in low complexity. 3 positions are modified to phosphoserine: Ser-162, Ser-163, and Ser-239. GAF domains lie at 217 to 370 (DLTS…GIAI) and 402 to 558 (DLEK…GLGI). Ser-424 is a binding site for 3',5'-cyclic GMP. A PDEase domain is found at 588–912 (SKAEVDKFKA…RKWEELHQKR (325 aa)). Catalysis depends on His-664, which acts as the Proton donor. A divalent metal cation is bound by residues His-668, His-704, Asp-705, and Asp-816. The disordered stretch occupies residues 915–935 (VSAASPVPSSPSPAVAGEDRL).

The protein belongs to the cyclic nucleotide phosphodiesterase family. A divalent metal cation serves as cofactor. In terms of tissue distribution, isoform 1 is expressed in brain, heart, kidney and liver, but not in prostate. Isoform 2 is specifically expressed in testis. Isoform 3 is expressed in various tissues including brain, lung, skeletal muscle, spleen, testis and prostate.

It localises to the cytoplasm. It is found in the cytosol. The enzyme catalyses 3',5'-cyclic GMP + H2O = GMP + H(+). It carries out the reaction 3',5'-cyclic AMP + H2O = AMP + H(+). With respect to regulation, inhibited by 3-isobutyl-1-methylxanthine (IBMX), zaprinast and dipyridamole. cGMP acts as an allosteric activator. In terms of biological role, plays a role in signal transduction by regulating the intracellular concentration of cyclic nucleotides cAMP and cGMP. Catalyzes the hydrolysis of both cAMP and cGMP to 5'-AMP and 5'-GMP, respectively. The protein is Dual 3',5'-cyclic-AMP and -GMP phosphodiesterase 11A of Rattus norvegicus (Rat).